Consider the following 227-residue polypeptide: Cytochrome c oxidase subunit 2 (227 aa).

Over 1 to 14 (MAYPVQLGFQDAAS) the chain is Mitochondrial intermembrane. A helical membrane pass occupies residues 15-45 (PIMEELLYFHDHTLMIMFLISSLVLYIISLM). Residues 46-59 (LTTELIHTSTMDAQ) lie on the Mitochondrial matrix side of the membrane. A helical membrane pass occupies residues 60–87 (EVETVWTILPAVILILIALPSLRILYMM). Residues 88 to 227 (DEISTPSLTL…HFEEWLLSML (140 aa)) lie on the Mitochondrial intermembrane side of the membrane. Positions 161, 196, 198, 200, 204, and 207 each coordinate Cu cation. A Mg(2+)-binding site is contributed by Glu198.

It belongs to the cytochrome c oxidase subunit 2 family. In terms of assembly, component of the cytochrome c oxidase (complex IV, CIV), a multisubunit enzyme composed of 14 subunits. The complex is composed of a catalytic core of 3 subunits MT-CO1, MT-CO2 and MT-CO3, encoded in the mitochondrial DNA, and 11 supernumerary subunits COX4I, COX5A, COX5B, COX6A, COX6B, COX6C, COX7A, COX7B, COX7C, COX8 and NDUFA4, which are encoded in the nuclear genome. The complex exists as a monomer or a dimer and forms supercomplexes (SCs) in the inner mitochondrial membrane with NADH-ubiquinone oxidoreductase (complex I, CI) and ubiquinol-cytochrome c oxidoreductase (cytochrome b-c1 complex, complex III, CIII), resulting in different assemblies (supercomplex SCI(1)III(2)IV(1) and megacomplex MCI(2)III(2)IV(2)). Found in a complex with TMEM177, COA6, COX18, COX20, SCO1 and SCO2. Interacts with TMEM177 in a COX20-dependent manner. Interacts with COX20. Interacts with COX16. It depends on Cu cation as a cofactor.

Its subcellular location is the mitochondrion inner membrane. The enzyme catalyses 4 Fe(II)-[cytochrome c] + O2 + 8 H(+)(in) = 4 Fe(III)-[cytochrome c] + 2 H2O + 4 H(+)(out). Its function is as follows. Component of the cytochrome c oxidase, the last enzyme in the mitochondrial electron transport chain which drives oxidative phosphorylation. The respiratory chain contains 3 multisubunit complexes succinate dehydrogenase (complex II, CII), ubiquinol-cytochrome c oxidoreductase (cytochrome b-c1 complex, complex III, CIII) and cytochrome c oxidase (complex IV, CIV), that cooperate to transfer electrons derived from NADH and succinate to molecular oxygen, creating an electrochemical gradient over the inner membrane that drives transmembrane transport and the ATP synthase. Cytochrome c oxidase is the component of the respiratory chain that catalyzes the reduction of oxygen to water. Electrons originating from reduced cytochrome c in the intermembrane space (IMS) are transferred via the dinuclear copper A center (CU(A)) of subunit 2 and heme A of subunit 1 to the active site in subunit 1, a binuclear center (BNC) formed by heme A3 and copper B (CU(B)). The BNC reduces molecular oxygen to 2 water molecules using 4 electrons from cytochrome c in the IMS and 4 protons from the mitochondrial matrix. The polypeptide is Cytochrome c oxidase subunit 2 (MT-CO2) (Eulemur macaco (Black lemur)).